A 543-amino-acid chain; its full sequence is Headcase protein homolog (543 aa).

2 disordered regions span residues 1 to 26 (MPNP…QENG) and 197 to 283 (MQDE…LSPA). Basic and acidic residues-rich tracts occupy residues 197 to 211 (MQDE…EKNT) and 235 to 250 (PSHD…RQNS). Serine 264 and serine 268 each carry phosphoserine.

Expressed in all tissues examined. Highest levels are in the spleen, thymus, peripheral blood and heart. Lowest in the kidney and pancreas.

Its function is as follows. May play an important role in some human cancers. May be part of the regulatory mechanism in the development of epithelial tube networks such as the circulatory system and lungs. This chain is Headcase protein homolog (HECA), found in Homo sapiens (Human).